A 662-amino-acid polypeptide reads, in one-letter code: Interferon-induced GTP-binding protein Mx1 (662 aa).

Met-1 bears the N-acetylmethionine; in Interferon-induced GTP-binding protein Mx1; alternate mark. In terms of domain architecture, Dynamin-type G spans 67–340 (DLALPAIAVI…LITHICKSLP (274 aa)). The tract at residues 77–84 (GDQSSGKS) is G1 motif. 77 to 84 (GDQSSGKS) contacts GTP. Residues 102–104 (VTR) form a G2 motif region. A G3 motif region spans residues 178–181 (DLPG). Residues 178 to 182 (DLPGI) and 247 to 250 (TKPD) each bind GTP. The tract at residues 247 to 250 (TKPD) is G4 motif. The tract at residues 279-282 (KCRG) is G5 motif. Positions 341-366 (LLENQIKETHQRITEELQKYGVDIPE) are bundle signaling element (BSE). A middle domain region spans residues 366-533 (EDENEKMFFL…HFQMEQIVYC (168 aa)). The segment at 367–632 (DENEKMFFLI…KDTYSWLLKE (266 aa)) is stalk. Positions 554-557 (KKKK) are critical for lipid-binding. Positions 574-662 (MEEIFQHLMA…ARRRLAQFPG (89 aa)) constitute a GED domain.

It belongs to the TRAFAC class dynamin-like GTPase superfamily. Dynamin/Fzo/YdjA family. Homotetramer. Oligomerizes into multimeric filamentous or ring-like structures by virtue of its stalk domain. Oligomerization is critical for GTPase activity, protein stability, and recognition of viral target structures. Interacts with TRPC1, TRPC3, TRPC4, TRPC5, TRPC6 and TRPC7. Interacts with HSPA5. Interacts with DDX39A and DDX39B. Interacts with TUBB/TUBB5. The GTP-bound form interacts (via C-terminus) with THOV P5 protein. The GTP-bound form interacts with LACV protein N. Interacts with CCHFV protein N. In terms of processing, ISGylated.

It localises to the cytoplasm. It is found in the endoplasmic reticulum membrane. The protein resides in the perinuclear region. The protein localises to the nucleus. Its function is as follows. Interferon-induced dynamin-like GTPase with antiviral activity against a wide range of RNA viruses and some DNA viruses. Its target viruses include negative-stranded RNA viruses and HBV through binding and inactivation of their ribonucleocapsid. May also antagonize reoviridae and asfarviridae replication. Inhibits thogoto virus (THOV) replication by preventing the nuclear import of viral nucleocapsids. Inhibits La Crosse virus (LACV) replication by sequestering viral nucleoprotein in perinuclear complexes, preventing genome amplification, budding, and egress. Inhibits influenza A virus (IAV) replication by decreasing or delaying NP synthesis and by blocking endocytic traffic of incoming virus particles. Enhances ER stress-mediated cell death after influenza virus infection. May regulate the calcium channel activity of TRPCs. This is Interferon-induced GTP-binding protein Mx1 (MX1) from Homo sapiens (Human).